The following is a 782-amino-acid chain: LPS-assembly protein LptD (782 aa).

The first 23 residues, 1 to 23 (MNKKHTLISLAILTALYSQQSLA), serve as a signal peptide directing secretion.

This sequence belongs to the LptD family. As to quaternary structure, component of the lipopolysaccharide transport and assembly complex. Interacts with LptE and LptA.

It is found in the cell outer membrane. Its function is as follows. Together with LptE, is involved in the assembly of lipopolysaccharide (LPS) at the surface of the outer membrane. This is LPS-assembly protein LptD from Haemophilus influenzae (strain ATCC 51907 / DSM 11121 / KW20 / Rd).